Consider the following 144-residue polypeptide: Large ribosomal subunit protein uL15 (144 aa).

Positions 1–53 (MRLNTLSPAEGAKHAPKRVGRGIGSGLGKTGGRGHKGQKSRSGGGVRRGFEGG) are disordered. The segment covering 21–31 (RGIGSGLGKTG) has biased composition (gly residues).

The protein belongs to the universal ribosomal protein uL15 family. In terms of assembly, part of the 50S ribosomal subunit.

Its function is as follows. Binds to the 23S rRNA. The chain is Large ribosomal subunit protein uL15 from Proteus mirabilis (strain HI4320).